The following is a 360-amino-acid chain: Plastid lipid-associated protein 3, chloroplastic (360 aa).

Residues 1–37 are compositionally biased toward polar residues; sequence MATLFTVTTTSRPFPANPSKTFSPSISLKPNALSFSL. Residues 1-52 constitute a chloroplast transit peptide; sequence MATLFTVTTTSRPFPANPSKTFSPSISLKPNALSFSLTHHRPPRPLRFSKIR. Positions 1 to 130 are disordered; the sequence is MATLFTVTTT…EWEEREADDG (130 aa). The segment covering 38 to 50 has biased composition (basic residues); it reads THHRPPRPLRFSK. Positions 53 to 68 are enriched in low complexity; that stretch reads SSLPSESDSEPEGGYS. Over residues 117-127 the composition is skewed to acidic residues; that stretch reads TNEDEWEEREA.

It belongs to the PAP/fibrillin family. Ubiquitous expression among various organs, but only at a very low level.

Its subcellular location is the plastid. It localises to the chloroplast. The sequence is that of Plastid lipid-associated protein 3, chloroplastic (PAP3) from Brassica campestris (Field mustard).